The primary structure comprises 138 residues: Basic phospholipase A2 vaspin B chain (138 aa).

An N-terminal signal peptide occupies residues 1 to 16 (MRILWIVAVCLIGVEG). 7 disulfides stabilise this stretch: C42/C131, C44/C60, C59/C111, C65/C138, C66/C104, C73/C97, and C91/C102. Y43, G45, and G47 together coordinate Ca(2+). H63 is an active-site residue. Residue D64 coordinates Ca(2+). The active site involves D105.

The protein belongs to the phospholipase A2 family. Group II subfamily. D49 sub-subfamily. As to quaternary structure, heterodimer of a weakly toxic basic protein having phospholipase A2 activity (B chain (AC Q8JFG1)) and a non-toxic acidic protein functioning as its inhibitor (A chain). Requires Ca(2+) as cofactor. As to expression, expressed by the venom gland.

The protein localises to the secreted. It catalyses the reaction a 1,2-diacyl-sn-glycero-3-phosphocholine + H2O = a 1-acyl-sn-glycero-3-phosphocholine + a fatty acid + H(+). Heterodimer: postsynaptic neurotoxin. Functionally, monomer: snake venom phospholipase A2 (PLA2) that shows postsynaptic neurotoxicity. PLA2 catalyzes the calcium-dependent hydrolysis of the 2-acyl groups in 3-sn-phosphoglycerides. The sequence is that of Basic phospholipase A2 vaspin B chain from Vipera aspis aspis (Aspic viper).